We begin with the raw amino-acid sequence, 528 residues long: GMP synthase [glutamine-hydrolyzing] (528 aa).

A Glutamine amidotransferase type-1 domain is found at 13 to 204 (AIVILDFGSQ…VNHICGCEQD (192 aa)). The active-site Nucleophile is the Cys-90. Active-site residues include His-178 and Glu-180. The GMPS ATP-PPase domain occupies 205–403 (WTTNAFIDEA…LGLPEEIVRR (199 aa)). 232–238 (SGGVDSS) lines the ATP pocket.

Homodimer.

The catalysed reaction is XMP + L-glutamine + ATP + H2O = GMP + L-glutamate + AMP + diphosphate + 2 H(+). Its pathway is purine metabolism; GMP biosynthesis; GMP from XMP (L-Gln route): step 1/1. In terms of biological role, catalyzes the synthesis of GMP from XMP. The sequence is that of GMP synthase [glutamine-hydrolyzing] from Synechococcus sp. (strain CC9902).